Consider the following 75-residue polypeptide: uncharacterized protein (75 aa).

This is an uncharacterized protein from Orgyia pseudotsugata (Douglas-fir tussock moth).